We begin with the raw amino-acid sequence, 229 residues long: MGGRMWLPFPVLLLSALPAALLRGAAGFTPSLDSDFTFTLPAGRKECFYQPMPLKASLEIEYQVLDGGELDIDFHLTSPEGRTLVFEQRKSDGVHTIETEDGDYMFCFDNTFSTISEKVIFFELILDNMGEEVQGQEDWKKYITNTDVLEMKLEDILESINSIKSRLSKSGHIQTLLRAFEARDRNIQESNFDRVNFWSVVNLMVMVVVSAIQVYTLKSLFEDKRKSRT.

A signal peptide spans Met1 to Gly27. The Lumenal segment spans residues Phe28 to Asn196. The region spanning Lys45–Leu126 is the GOLD domain. Residues Phe197–Leu217 form a helical membrane-spanning segment. Topologically, residues Lys218 to Thr229 are cytoplasmic.

The protein belongs to the EMP24/GP25L family. In terms of assembly, interacts with TMED9 and TMED10.

It is found in the endoplasmic reticulum membrane. The protein localises to the golgi apparatus. It localises to the cis-Golgi network membrane. The protein resides in the endoplasmic reticulum-Golgi intermediate compartment membrane. In terms of biological role, potential role in vesicular protein trafficking, mainly in the early secretory pathway. Required for the maintenance of the Golgi apparatus; involved in protein exchange between Golgi stacks during assembly. Probably not required for COPI-vesicle-mediated retrograde transport. In Mus musculus (Mouse), this protein is Transmembrane emp24 domain-containing protein 5 (Tmed5).